We begin with the raw amino-acid sequence, 662 residues long: DNA topoisomerase 4 subunit B (662 aa).

ATP contacts are provided by residues Y20, N60, D87, 129 to 135 (GLHGVGI), and K359. Residues 439–553 (TELFIVEGDS…EGHLYLAKPP (115 aa)) form the Toprim domain. Residues E445, D518, and D520 each coordinate Mg(2+).

Belongs to the type II topoisomerase family. ParE type 1 subfamily. Heterotetramer composed of ParC and ParE. Mg(2+) is required as a cofactor. Mn(2+) serves as cofactor. It depends on Ca(2+) as a cofactor.

It carries out the reaction ATP-dependent breakage, passage and rejoining of double-stranded DNA.. Functionally, topoisomerase IV is essential for chromosome segregation. It relaxes supercoiled DNA. Performs the decatenation events required during the replication of a circular DNA molecule. The sequence is that of DNA topoisomerase 4 subunit B from Rickettsia conorii (strain ATCC VR-613 / Malish 7).